The following is a 142-amino-acid chain: MAKKVQAYVKLQVAAGMANPSPPVGPALGQQGVNIMEFCKAFNAKTDSIEKGLPIPVVITVYADRSFTFITKTPPAAVLLKKAAGIKSGSGKPNKDKVGKISRAQLQEIAQTKAADMTGADIEAMTRSIEGTARSMGLVVED.

This sequence belongs to the universal ribosomal protein uL11 family. Part of the ribosomal stalk of the 50S ribosomal subunit. Interacts with L10 and the large rRNA to form the base of the stalk. L10 forms an elongated spine to which L12 dimers bind in a sequential fashion forming a multimeric L10(L12)X complex. One or more lysine residues are methylated.

Its function is as follows. Forms part of the ribosomal stalk which helps the ribosome interact with GTP-bound translation factors. The protein is Large ribosomal subunit protein uL11 of Citrobacter koseri (strain ATCC BAA-895 / CDC 4225-83 / SGSC4696).